The primary structure comprises 612 residues: uncharacterized protein (612 aa).

A coiled-coil region spans residues 39–100 (ERDHNLWEIE…KNISVKDLDE (62 aa)). A disordered region spans residues 219–241 (PLSSGESLPKKEEEVTKSPSFTL). WD repeat units follow at residues 286 to 325 (TSTQ…NDNS), 337 to 376 (GHEG…TSDS), 389 to 432 (GHED…FKIR), 434 to 470 (DSKQ…LVSQ), 483 to 523 (AVKD…LLAE), 526 to 565 (ISKV…STLE), and 574 to 612 (EEIT…KYLP).

Its subcellular location is the cytoplasm. This is an uncharacterized protein from Schizosaccharomyces pombe (strain 972 / ATCC 24843) (Fission yeast).